Consider the following 107-residue polypeptide: MKALSVLCFHNPFKRCLGQKSFFVGDSFFIPTPKRLVLGKLRLSNYTAFHDLIIHDLFIYIFILNFFFFPFCNNFNYWKVFHVAQPRIYHHSRLVMILKVSLECAVS.

A helical transmembrane segment spans residues 52 to 72 (LIIHDLFIYIFILNFFFFPFC).

It localises to the membrane. This is an uncharacterized protein from Saccharomyces cerevisiae (strain ATCC 204508 / S288c) (Baker's yeast).